The following is a 345-amino-acid chain: Nicotinate-nucleotide--dimethylbenzimidazole phosphoribosyltransferase (345 aa).

The active-site Proton acceptor is Glu312.

The protein belongs to the CobT family.

The catalysed reaction is 5,6-dimethylbenzimidazole + nicotinate beta-D-ribonucleotide = alpha-ribazole 5'-phosphate + nicotinate + H(+). It functions in the pathway nucleoside biosynthesis; alpha-ribazole biosynthesis; alpha-ribazole from 5,6-dimethylbenzimidazole: step 1/2. Functionally, catalyzes the synthesis of alpha-ribazole-5'-phosphate from nicotinate mononucleotide (NAMN) and 5,6-dimethylbenzimidazole (DMB). In Bacteroides fragilis (strain ATCC 25285 / DSM 2151 / CCUG 4856 / JCM 11019 / LMG 10263 / NCTC 9343 / Onslow / VPI 2553 / EN-2), this protein is Nicotinate-nucleotide--dimethylbenzimidazole phosphoribosyltransferase.